A 450-amino-acid chain; its full sequence is Adenylosuccinate lyase (450 aa).

Residues 9–10 (RY), 75–77 (HHD), and 101–102 (TS) each bind N(6)-(1,2-dicarboxyethyl)-AMP. The active-site Proton donor/acceptor is the H149. Q223 provides a ligand contact to N(6)-(1,2-dicarboxyethyl)-AMP. S273 functions as the Proton donor/acceptor in the catalytic mechanism. N(6)-(1,2-dicarboxyethyl)-AMP is bound by residues S274, 279-281 (KRN), and 318-322 (SVERV).

This sequence belongs to the lyase 1 family. Adenylosuccinate lyase subfamily. In terms of assembly, homotetramer. Residues from neighboring subunits contribute catalytic and substrate-binding residues to each active site.

It carries out the reaction N(6)-(1,2-dicarboxyethyl)-AMP = fumarate + AMP. The catalysed reaction is (2S)-2-[5-amino-1-(5-phospho-beta-D-ribosyl)imidazole-4-carboxamido]succinate = 5-amino-1-(5-phospho-beta-D-ribosyl)imidazole-4-carboxamide + fumarate. The protein operates within purine metabolism; AMP biosynthesis via de novo pathway; AMP from IMP: step 2/2. Its pathway is purine metabolism; IMP biosynthesis via de novo pathway; 5-amino-1-(5-phospho-D-ribosyl)imidazole-4-carboxamide from 5-amino-1-(5-phospho-D-ribosyl)imidazole-4-carboxylate: step 2/2. In terms of biological role, catalyzes two reactions in de novo purine nucleotide biosynthesis. Catalyzes the breakdown of 5-aminoimidazole- (N-succinylocarboxamide) ribotide (SAICAR or 2-[5-amino-1-(5-phospho-beta-D-ribosyl)imidazole-4-carboxamido]succinate) to 5-aminoimidazole-4-carboxamide ribotide (AICAR or 5-amino-1-(5-phospho-beta-D-ribosyl)imidazole-4-carboxamide) and fumarate, and of adenylosuccinate (ADS or N(6)-(1,2-dicarboxyethyl)-AMP) to adenosine monophosphate (AMP) and fumarate. This chain is Adenylosuccinate lyase (purB), found in Pyrococcus abyssi (strain GE5 / Orsay).